The chain runs to 1020 residues: Neurofilament heavy polypeptide (1020 aa).

The head stretch occupies residues 1–100; the sequence is MMSFGGADAL…VATSRSEKEQ (100 aa). The disordered stretch occupies residues 58–83; sequence VSASPSRFRGAGAASSTDSLDTLSNG. The segment covering 71–82 has biased composition (polar residues); it reads ASSTDSLDTLSN. A phosphoserine mark is found at Ser76 and Ser124. One can recognise an IF rod domain in the interval 97 to 413; sequence EKEQLQALND…KLLEGEECRI (317 aa). The tract at residues 101–132 is coil 1A; sequence LQALNDRFAGYIDKVRQLEAHNRSLEGEAAAL. Residues 133 to 145 form a linker 1 region; the sequence is RQQQAGRSAMGEL. The coil 1B stretch occupies residues 146 to 244; the sequence is YEREVREMRG…QEEVGELLGQ (99 aa). The tract at residues 245–266 is linker 12; sequence IQGSGAAQAQMQAETRDALKCD. Residues 267–288 are coil 2A; it reads VTSALREIRAQLEGHAVQSTLQ. Positions 289-292 are linker 2; sequence SEEW. The interval 293–413 is coil 2B; it reads FRVRLDRLSE…KLLEGEECRI (121 aa). 2 positions are modified to phosphoserine: Ser347 and Ser421. The interval 414-1020 is tail; it reads GFGPIPFSLP…ATEDKAAKGK (607 aa). The interval 456–1020 is disordered; that stretch reads IVEEQTEETQ…ATEDKAAKGK (565 aa). Composition is skewed to acidic residues over residues 459-475 and 483-498; these read EQTE…EEEE and GKEE…EGGE. 28 positions are modified to phosphoserine: Ser511, Ser526, Ser532, Ser540, Ser546, Ser552, Ser560, Ser566, Ser574, Ser580, Ser586, Ser594, Ser600, Ser606, Ser614, Ser620, Ser628, Ser634, Ser640, Ser648, Ser654, Ser662, Ser668, Ser676, Ser682, Ser690, Ser696, and Ser704. A compositionally biased stretch (basic and acidic residues) spans 511–1020; it reads SPEKEAKSPV…ATEDKAAKGK (510 aa). 4 consecutive repeat copies span residues 525-530, 531-536, 539-544, and 545-550. Residues 525 to 826 are 30 X 6 AA repeats of K-S-P-[AEPV]-[EAK]-[AEVK]; the sequence is KSPAEAKSPE…KEEVKSPVKE (302 aa). Repeat 5 spans residues 559–564; the sequence is KSPPEA. 2 repeat units span residues 573–578 and 579–584. 2 tandem repeats follow at residues 593 to 598 and 599 to 604. Repeat 10 spans residues 613 to 618; sequence KSPAEA. Tandem repeats lie at residues 627 to 632, 633 to 638, 639 to 644, and 647 to 652. 12 consecutive repeat copies span residues 661–666, 667–672, 675–680, 681–686, 689–694, 695–700, 703–708, 709–714, 717–722, 723–728, 737–742, and 745–750. Ser718, Ser724, and Ser738 each carry phosphoserine. A phosphoserine mark is found at Ser752 and Ser763. Copy 27 of the repeat occupies 762–767; that stretch reads KSPEAK. Position 768 is a phosphothreonine (Thr768). A run of 3 repeats spans residues 786–791, 794–799, and 821–826. Phosphoserine is present on residues Ser787, Ser795, Ser822, and Ser888.

It belongs to the intermediate filament family. As to quaternary structure, forms heterodimers with NEFL; which can further hetero-oligomerize (in vitro). Forms heterodimers with INA (in vitro). In terms of processing, there are a number of repeats of the tripeptide K-S-P, NFH is phosphorylated on a number of the serines in this motif. It is thought that phosphorylation of NFH results in the formation of interfilament cross bridges that are important in the maintenance of axonal caliber. Post-translationally, phosphorylation seems to play a major role in the functioning of the larger neurofilament polypeptides (NF-M and NF-H), the levels of phosphorylation being altered developmentally and coincidentally with a change in the neurofilament function. Phosphorylated in the head and rod regions by the PKC kinase PKN1, leading to the inhibition of polymerization.

Its subcellular location is the cytoplasm. The protein resides in the cytoskeleton. It localises to the cell projection. The protein localises to the axon. Neurofilaments usually contain three intermediate filament proteins: NEFL, NEFM, and NEFH which are involved in the maintenance of neuronal caliber. NEFH has an important function in mature axons that is not subserved by the two smaller NF proteins. May additionally cooperate with the neuronal intermediate filament proteins PRPH and INA to form neuronal filamentous networks. The polypeptide is Neurofilament heavy polypeptide (NEFH) (Homo sapiens (Human)).